A 103-amino-acid polypeptide reads, in one-letter code: uncharacterized protein (103 aa).

This is an uncharacterized protein from Haemophilus influenzae (strain ATCC 51907 / DSM 11121 / KW20 / Rd).